A 346-amino-acid polypeptide reads, in one-letter code: Putative toluene-4-sulfonate monooxygenase system iron-sulfur subunit TsaM2 (346 aa).

Positions 7-108 (WYVAGMATDC…LVERHGLLWI (102 aa)) constitute a Rieske domain. Residues Cys-47, His-49, Cys-66, and His-69 each coordinate [2Fe-2S] cluster.

In terms of assembly, homotetramer. Part of the p-toluenesulfonate methyl-monooxygenase complex TsaBM, comprising the reductase TsaB and the oxygenase TsaM. [2Fe-2S] cluster is required as a cofactor.

It carries out the reaction toluene-4-sulfonate + NADH + O2 + H(+) = 4-(hydroxymethyl)benzenesulfonate + NAD(+) + H2O. Functionally, involved in the toluene-4-sulfonate degradation pathway. Does not discriminate between the sulfonate and the carboxyl substituents and can also be involved in the p-toluenecarboxylate degradation pathway. This chain is Putative toluene-4-sulfonate monooxygenase system iron-sulfur subunit TsaM2 (tsaM2), found in Comamonas testosteroni (Pseudomonas testosteroni).